A 340-amino-acid polypeptide reads, in one-letter code: Phosphoribosylformylglycinamidine cyclo-ligase (340 aa).

The protein belongs to the AIR synthase family.

It is found in the cytoplasm. It catalyses the reaction 2-formamido-N(1)-(5-O-phospho-beta-D-ribosyl)acetamidine + ATP = 5-amino-1-(5-phospho-beta-D-ribosyl)imidazole + ADP + phosphate + H(+). The protein operates within purine metabolism; IMP biosynthesis via de novo pathway; 5-amino-1-(5-phospho-D-ribosyl)imidazole from N(2)-formyl-N(1)-(5-phospho-D-ribosyl)glycinamide: step 2/2. The protein is Phosphoribosylformylglycinamidine cyclo-ligase of Streptococcus pyogenes serotype M6 (strain ATCC BAA-946 / MGAS10394).